The following is a 273-amino-acid chain: Translation initiation factor 2 subunit alpha (273 aa).

Residues 12–83 (GEFVVATVKN…EKGHIDLSLK (72 aa)) form the S1 motif domain.

The protein belongs to the eIF-2-alpha family. In terms of assembly, heterotrimer composed of an alpha, a beta and a gamma chain.

EIF-2 functions in the early steps of protein synthesis by forming a ternary complex with GTP and initiator tRNA. The chain is Translation initiation factor 2 subunit alpha from Thermococcus gammatolerans (strain DSM 15229 / JCM 11827 / EJ3).